A 266-amino-acid chain; its full sequence is Putative carbamate hydrolase RutD (266 aa).

Residues 15–128 (AVLLSSGLGG…NAHSARCFDA (114 aa)) enclose the AB hydrolase-1 domain.

It belongs to the AB hydrolase superfamily. Hydrolase RutD family.

The enzyme catalyses carbamate + 2 H(+) = NH4(+) + CO2. Its function is as follows. Involved in pyrimidine catabolism. May facilitate the hydrolysis of carbamate, a reaction that can also occur spontaneously. This chain is Putative carbamate hydrolase RutD, found in Variovorax paradoxus (strain S110).